A 382-amino-acid chain; its full sequence is Galactokinase (382 aa).

34–37 is a substrate binding site; that stretch reads EHTD. 124 to 130 contacts ATP; sequence GAGLSSS. Mg(2+)-binding residues include Ser130 and Glu162. The active-site Proton acceptor is the Asp174. Residue Tyr223 coordinates substrate.

This sequence belongs to the GHMP kinase family. GalK subfamily.

Its subcellular location is the cytoplasm. The enzyme catalyses alpha-D-galactose + ATP = alpha-D-galactose 1-phosphate + ADP + H(+). It participates in carbohydrate metabolism; galactose metabolism. In terms of biological role, catalyzes the transfer of the gamma-phosphate of ATP to D-galactose to form alpha-D-galactose-1-phosphate (Gal-1-P). The sequence is that of Galactokinase from Escherichia coli (strain SMS-3-5 / SECEC).